A 420-amino-acid polypeptide reads, in one-letter code: Tyrosine--tRNA ligase (420 aa).

Position 38 (Tyr38) interacts with L-tyrosine. The 'HIGH' region motif lies at 43–52 (PTGDSLHIGH). L-tyrosine-binding residues include Tyr169 and Gln173. The 'KMSKS' region motif lies at 231–235 (KFGKS). An ATP-binding site is contributed by Lys234. The 67-residue stretch at 353 to 419 (KNIVDFLVDT…GKRKYTLVTI (67 aa)) folds into the S4 RNA-binding domain.

It belongs to the class-I aminoacyl-tRNA synthetase family. TyrS type 1 subfamily. As to quaternary structure, homodimer.

The protein localises to the cytoplasm. It carries out the reaction tRNA(Tyr) + L-tyrosine + ATP = L-tyrosyl-tRNA(Tyr) + AMP + diphosphate + H(+). In terms of biological role, catalyzes the attachment of tyrosine to tRNA(Tyr) in a two-step reaction: tyrosine is first activated by ATP to form Tyr-AMP and then transferred to the acceptor end of tRNA(Tyr). The chain is Tyrosine--tRNA ligase from Lactobacillus acidophilus (strain ATCC 700396 / NCK56 / N2 / NCFM).